A 348-amino-acid chain; its full sequence is Quinolinate synthase (348 aa).

Positions 47 and 68 each coordinate iminosuccinate. Cys-113 provides a ligand contact to [4Fe-4S] cluster. Iminosuccinate contacts are provided by residues 139–141 (YAN) and Ser-156. Cys-200 is a [4Fe-4S] cluster binding site. Iminosuccinate-binding positions include 226–228 (HPE) and Thr-243. Cys-297 serves as a coordination point for [4Fe-4S] cluster.

It belongs to the quinolinate synthase family. Type 1 subfamily. [4Fe-4S] cluster serves as cofactor.

The protein resides in the cytoplasm. The catalysed reaction is iminosuccinate + dihydroxyacetone phosphate = quinolinate + phosphate + 2 H2O + H(+). It participates in cofactor biosynthesis; NAD(+) biosynthesis; quinolinate from iminoaspartate: step 1/1. Its function is as follows. Catalyzes the condensation of iminoaspartate with dihydroxyacetone phosphate to form quinolinate. This is Quinolinate synthase from Sodalis glossinidius (strain morsitans).